A 792-amino-acid polypeptide reads, in one-letter code: Cullin-4 (792 aa).

Polar residues predominate over residues 1–10; that stretch reads MSLPTKRSTF. Residues 1–43 are disordered; it reads MSLPTKRSTFSAASASDDSSYSSPPMKKAKNDLHHSPQHPNTA. The span at 11 to 23 shows a compositional bias: low complexity; sequence SAASASDDSSYSS. The 61-residue stretch at 724 to 784 folds into the Cullin neddylation domain; the sequence is DRQYQIDAAI…REYLEREKSN (61 aa). Residue Lys738 forms a Glycyl lysine isopeptide (Lys-Gly) (interchain with G-Cter in NEDD8) linkage.

This sequence belongs to the cullin family. Interacts with COP10, CSN3, CSN4, CSN5, CSN8, DDB1A, DDB1B, DDB2, DET1 and RBX1. Post-translationally, neddylated (rubylated). Deneddylated via its interaction with the COP9 signalosome (CSN) complex. Ubiquitous.

It localises to the nucleus. Its pathway is protein modification; protein ubiquitination. In terms of biological role, component of the CUL4-RBX1-CDD (COP10-DDB1a-DET1) E3 ubiquitin-protein ligase complex which mediates the ubiquitination and subsequent proteasomal degradation of target proteins. Participates in the CDD complex to light-mediated control of development. May repress photomorphogenesis through enhancing COP1 E3 ubiquitin-protein ligase activity. Acts together with the CUL4-DDB1-COP1-SPA E3 ubiquitin-protein ligase complexes in the repression of photomorphogenesis and flowering time. Component ot the CUL4-RBX1-DDB1-PRL1 E3 ubiquitin-protein ligase complex which mediates ubiquitination and subsequent degradation of AKIN10. Component of the CUL4-RBX1-DDB1-DWA1/DWA2 E3 ubiquitin-protein ligase complex that acts as a negative regulator in abscisic acid (ABA) signaling and may target ABI5 for degradation. The sequence is that of Cullin-4 (CUL4) from Arabidopsis thaliana (Mouse-ear cress).